The following is a 129-amino-acid chain: Small ribosomal subunit protein uS11 (129 aa).

It belongs to the universal ribosomal protein uS11 family. Part of the 30S ribosomal subunit. Interacts with proteins S7 and S18. Binds to IF-3.

Functionally, located on the platform of the 30S subunit, it bridges several disparate RNA helices of the 16S rRNA. Forms part of the Shine-Dalgarno cleft in the 70S ribosome. The sequence is that of Small ribosomal subunit protein uS11 from Nitratidesulfovibrio vulgaris (strain ATCC 29579 / DSM 644 / CCUG 34227 / NCIMB 8303 / VKM B-1760 / Hildenborough) (Desulfovibrio vulgaris).